Here is a 337-residue protein sequence, read N- to C-terminus: Lipoate-protein ligase A (337 aa).

The BPL/LPL catalytic domain occupies 29-216; that stretch reads DQNQTILFLW…AFFNYYQTTV (188 aa). Residues arginine 71, 76-79, and lysine 134 each bind ATP; that span reads GAVF. Residue lysine 134 coordinates (R)-lipoate.

This sequence belongs to the LplA family. As to quaternary structure, monomer.

The protein localises to the cytoplasm. The enzyme catalyses L-lysyl-[lipoyl-carrier protein] + (R)-lipoate + ATP = N(6)-[(R)-lipoyl]-L-lysyl-[lipoyl-carrier protein] + AMP + diphosphate + H(+). Its pathway is protein modification; protein lipoylation via exogenous pathway; protein N(6)-(lipoyl)lysine from lipoate: step 1/2. It participates in protein modification; protein lipoylation via exogenous pathway; protein N(6)-(lipoyl)lysine from lipoate: step 2/2. Catalyzes both the ATP-dependent activation of exogenously supplied lipoate to lipoyl-AMP and the transfer of the activated lipoyl onto the lipoyl domains of lipoate-dependent enzymes. The polypeptide is Lipoate-protein ligase A (Blochmanniella floridana).